The sequence spans 142 residues: Large ribosomal subunit protein uL13 (142 aa).

This sequence belongs to the universal ribosomal protein uL13 family. As to quaternary structure, part of the 50S ribosomal subunit.

In terms of biological role, this protein is one of the early assembly proteins of the 50S ribosomal subunit, although it is not seen to bind rRNA by itself. It is important during the early stages of 50S assembly. The polypeptide is Large ribosomal subunit protein uL13 (Aromatoleum aromaticum (strain DSM 19018 / LMG 30748 / EbN1) (Azoarcus sp. (strain EbN1))).